The chain runs to 295 residues: ATP synthase gamma chain (295 aa).

Belongs to the ATPase gamma chain family. F-type ATPases have 2 components, CF(1) - the catalytic core - and CF(0) - the membrane proton channel. CF(1) has five subunits: alpha(3), beta(3), gamma(1), delta(1), epsilon(1). CF(0) has three main subunits: a, b and c.

The protein localises to the cell inner membrane. Functionally, produces ATP from ADP in the presence of a proton gradient across the membrane. The gamma chain is believed to be important in regulating ATPase activity and the flow of protons through the CF(0) complex. This is ATP synthase gamma chain from Paraburkholderia phymatum (strain DSM 17167 / CIP 108236 / LMG 21445 / STM815) (Burkholderia phymatum).